Reading from the N-terminus, the 397-residue chain is Cytochrome b (397 aa).

4 consecutive transmembrane segments (helical) span residues 38 to 58 (FGSL…FLAM), 82 to 104 (WLLR…LHIF), 119 to 139 (VWCL…IGYV), and 185 to 205 (FFSL…LHLA). Positions 88 and 102 each coordinate heme b. Heme b-binding residues include His189 and His203. His208 serves as a coordination point for a ubiquinone. A run of 4 helical transmembrane segments spans residues 231–251 (FYVK…IWIF), 295–315 (AGGV…PFFK), 327–347 (IYQG…WIGC), and 354–373 (FVTI…AITP).

It belongs to the cytochrome b family. As to quaternary structure, the main subunits of complex b-c1 are: cytochrome b, cytochrome c1 and the Rieske protein. It depends on heme b as a cofactor.

The protein resides in the mitochondrion inner membrane. Component of the ubiquinol-cytochrome c reductase complex (complex III or cytochrome b-c1 complex) that is part of the mitochondrial respiratory chain. The b-c1 complex mediates electron transfer from ubiquinol to cytochrome c. Contributes to the generation of a proton gradient across the mitochondrial membrane that is then used for ATP synthesis. This chain is Cytochrome b (MT-CYB), found in Oryza sativa subsp. japonica (Rice).